Consider the following 214-residue polypeptide: Late embryogenesis abundant protein At1g64065 (214 aa).

The helical transmembrane segment at 41–61 (VYSLTIIVIIFALCLILSSIF) threads the bilayer.

The protein belongs to the LEA type 2 family.

It localises to the membrane. The sequence is that of Late embryogenesis abundant protein At1g64065 from Arabidopsis thaliana (Mouse-ear cress).